The following is a 948-amino-acid chain: Putative helicase 009L (948 aa).

The Helicase ATP-binding domain occupies 64–243; it reads LSEDTPYREL…ADVLNLILPQ (180 aa). An ATP-binding site is contributed by 77 to 84; the sequence is HAPGTGKT. Positions 187–190 match the DEAH box motif; sequence DEVH. The Helicase C-terminal domain maps to 371 to 554; the sequence is VKYDYLVRVA…AVERILMTSA (184 aa).

This Frog virus 3 (isolate Goorha) (FV-3) protein is Putative helicase 009L.